The following is a 267-amino-acid chain: Cilia- and flagella-associated protein 300 (267 aa).

Belongs to the CFAP300 family. As to quaternary structure, interacts with DNAAF2. In terms of tissue distribution, expressed in the left-right organiser (LRO) node at 8.25 dpc.

It localises to the cytoplasm. The protein resides in the cytoskeleton. The protein localises to the cilium axoneme. Functionally, cilium- and flagellum-specific protein that plays a role in axonemal structure organization and motility. May play a role in outer and inner dynein arm assembly. This chain is Cilia- and flagella-associated protein 300, found in Mus musculus (Mouse).